The sequence spans 445 residues: Argininosuccinate synthase (445 aa).

Residues 17–25 (AFSGGLDTS) and Ala-43 contribute to the ATP site. Tyr-99 serves as a coordination point for L-citrulline. Gly-129 and Thr-131 together coordinate ATP. L-aspartate contacts are provided by Thr-131, Asn-135, and Asp-136. Asn-135 contacts L-citrulline. Residue Asp-136 coordinates ATP. Residues Arg-139 and Ser-192 each coordinate L-citrulline. An ATP-binding site is contributed by Asp-194. Thr-201, Glu-203, and Glu-280 together coordinate L-citrulline.

Belongs to the argininosuccinate synthase family. Type 2 subfamily. Homotetramer.

It localises to the cytoplasm. It catalyses the reaction L-citrulline + L-aspartate + ATP = 2-(N(omega)-L-arginino)succinate + AMP + diphosphate + H(+). The protein operates within amino-acid biosynthesis; L-arginine biosynthesis; L-arginine from L-ornithine and carbamoyl phosphate: step 2/3. The chain is Argininosuccinate synthase from Burkholderia ambifaria (strain MC40-6).